The chain runs to 251 residues: GTP cyclohydrolase 1 type 2 homolog (251 aa).

5 residues coordinate a divalent metal cation: His-64, His-65, Asp-102, His-219, and Glu-223.

The protein belongs to the GTP cyclohydrolase I type 2/NIF3 family. In terms of assembly, homohexamer.

This is GTP cyclohydrolase 1 type 2 homolog from Chlamydia pneumoniae (Chlamydophila pneumoniae).